A 966-amino-acid polypeptide reads, in one-letter code: Probable LIM domain-containing serine/threonine-protein kinase DDB_G0286997 (966 aa).

LIM zinc-binding domains are found at residues 3–62 (SRCG…LNAP) and 63–120 (KCFK…KPPP). Disordered regions lie at residues 208–291 (YSLS…PTED) and 331–588 (PLNQ…EQQV). Positions 211–231 (SSPSSSSSSSSSSSSSSSSPP) are enriched in low complexity. A compositionally biased stretch (polar residues) spans 232–269 (NTFNKSSDFLRNPLNNNVKSSSSSIGGNFVNKSQQQQQ). Composition is skewed to low complexity over residues 270–284 (PIDS…ISPS) and 331–350 (PLNQ…SPNL). Positions 374 to 389 (TTTFSNPLLKTKNQSF) are enriched in polar residues. Over residues 419 to 430 (PLPPPPITPIPS) the composition is skewed to pro residues. Residues 431–449 (PSSSSIIINNQQQQQQESQ) show a composition bias toward low complexity. Pro residues predominate over residues 490–511 (KPIVLPPPPLDMEQLPLPPPPL). A compositionally biased stretch (polar residues) spans 513–526 (SSQINQSLKSTQHN). The span at 543–560 (IQKQSIPTRKPQLPQSSN) shows a compositional bias: low complexity. The segment covering 561–570 (PSPPSPPSPQ) has biased composition (pro residues). Residues 702–959 (VIFGDVIAAG…DTLKKISESL (258 aa)) enclose the Protein kinase domain. ATP contacts are provided by residues 708–716 (IAAGASGKV) and K729. D825 serves as the catalytic Proton acceptor.

It belongs to the protein kinase superfamily. TKL Ser/Thr protein kinase family.

The enzyme catalyses L-seryl-[protein] + ATP = O-phospho-L-seryl-[protein] + ADP + H(+). It carries out the reaction L-threonyl-[protein] + ATP = O-phospho-L-threonyl-[protein] + ADP + H(+). This chain is Probable LIM domain-containing serine/threonine-protein kinase DDB_G0286997, found in Dictyostelium discoideum (Social amoeba).